The following is a 189-amino-acid chain: Apolipoprotein D (189 aa).

The signal sequence occupies residues 1 to 20 (MATMLLLLATLAGLFTTTEG). Gln-21 is modified (pyrrolidone carboxylic acid). 2 cysteine pairs are disulfide-bonded: Cys-28-Cys-134 and Cys-61-Cys-185. N-linked (GlcNAc...) asparagine glycosylation is found at Asn-65 and Asn-98.

This sequence belongs to the calycin superfamily. Lipocalin family. As to quaternary structure, homodimer. Expressed in liver, kidney, bladder, adrenal, cerebrum, duodenum, testis, lung, spleen, pancreas, heart and skin.

The protein resides in the secreted. Functionally, APOD occurs in the macromolecular complex with lecithin-transport and binding of bilin. Appears to be able to transport a variety of ligands in a number of different contexts. The chain is Apolipoprotein D (Apod) from Rattus norvegicus (Rat).